Here is a 549-residue protein sequence, read N- to C-terminus: Endoplasmic reticulum mannosyl-oligosaccharide 1,2-alpha-mannosidase (549 aa).

Residues 1–4 (MKNS) are Cytoplasmic-facing. Residues 5–24 (VGISIATIVAIIAAIYYVPW) form a helical; Signal-anchor for type II membrane protein membrane-spanning segment. Over 25–354 (YEHFERKSPG…LLASGSTEGL (330 aa)) the chain is Lumenal. Residues Asn96, Asn155, and Asn224 are each glycosylated (N-linked (GlcNAc...) asparagine). Cysteines 340 and 385 form a disulfide. Glu399 (proton donor) is an active-site residue. A disulfide bridge connects residues Cys468 and Cys471. Position 525 (Thr525) interacts with Ca(2+).

The protein belongs to the glycosyl hydrolase 47 family. In terms of assembly, homodimer. Requires Ca(2+) as cofactor.

It is found in the endoplasmic reticulum membrane. It carries out the reaction N(4)-(alpha-D-Man-(1-&gt;2)-alpha-D-Man-(1-&gt;2)-alpha-D-Man-(1-&gt;3)-[alpha-D-Man-(1-&gt;2)-alpha-D-Man-(1-&gt;3)-[alpha-D-Man-(1-&gt;2)-alpha-D-Man-(1-&gt;6)]-alpha-D-Man-(1-&gt;6)]-beta-D-Man-(1-&gt;4)-beta-D-GlcNAc-(1-&gt;4)-beta-D-GlcNAc)-L-asparaginyl-[protein] (N-glucan mannose isomer 9A1,2,3B1,2,3) + 4 H2O = N(4)-(alpha-D-Man-(1-&gt;3)-[alpha-D-Man-(1-&gt;3)-[alpha-D-Man-(1-&gt;6)]-alpha-D-Man-(1-&gt;6)]-beta-D-Man-(1-&gt;4)-beta-D-GlcNAc-(1-&gt;4)-beta-D-GlcNAc)-L-asparaginyl-[protein] (N-glucan mannose isomer 5A1,2) + 4 beta-D-mannose. It catalyses the reaction N(4)-(alpha-D-Man-(1-&gt;2)-alpha-D-Man-(1-&gt;2)-alpha-D-Man-(1-&gt;3)-[alpha-D-Man-(1-&gt;3)-[alpha-D-Man-(1-&gt;2)-alpha-D-Man-(1-&gt;6)]-alpha-D-Man-(1-&gt;6)]-beta-D-Man-(1-&gt;4)-beta-D-GlcNAc-(1-&gt;4)-beta-D-GlcNAc)-L-asparaginyl-[protein] (N-glucan mannose isomer 8A1,2,3B1,3) + 3 H2O = N(4)-(alpha-D-Man-(1-&gt;3)-[alpha-D-Man-(1-&gt;3)-[alpha-D-Man-(1-&gt;6)]-alpha-D-Man-(1-&gt;6)]-beta-D-Man-(1-&gt;4)-beta-D-GlcNAc-(1-&gt;4)-beta-D-GlcNAc)-L-asparaginyl-[protein] (N-glucan mannose isomer 5A1,2) + 3 beta-D-mannose. Its pathway is protein modification; protein glycosylation. Its function is as follows. Involved in glycoprotein quality control as it is important for the targeting of misfolded glycoproteins for degradation. It primarily trims a single alpha-1,2-linked mannose residue from Man(9)GlcNAc(2) to produce Man(8)GlcNAc(2), but at high enzyme concentrations it further trims the carbohydrates to Man(5)GlcNAc(2). This Saccharomyces cerevisiae (strain ATCC 204508 / S288c) (Baker's yeast) protein is Endoplasmic reticulum mannosyl-oligosaccharide 1,2-alpha-mannosidase (MNS1).